We begin with the raw amino-acid sequence, 704 residues long: UvrABC system protein C (704 aa).

A disordered region spans residues 1–77 (MIHDPAEPPA…PAQAGAGPMA (77 aa)). Residues 49–66 (VEEDDEARLPEVEDEPEA) show a composition bias toward acidic residues. The span at 67–77 (EPAQAGAGPMA) shows a compositional bias: low complexity. The GIY-YIG domain maps to 92 to 170 (TSPGVYRMLN…IKQLRPRFNV (79 aa)). Positions 280 to 315 (RAVKELLAAEMEKASGELEFETAALYRDRLAALSAI) constitute a UVR domain.

It belongs to the UvrC family. As to quaternary structure, interacts with UvrB in an incision complex.

The protein resides in the cytoplasm. Its function is as follows. The UvrABC repair system catalyzes the recognition and processing of DNA lesions. UvrC both incises the 5' and 3' sides of the lesion. The N-terminal half is responsible for the 3' incision and the C-terminal half is responsible for the 5' incision. The polypeptide is UvrABC system protein C (Rhodopseudomonas palustris (strain ATCC BAA-98 / CGA009)).